The chain runs to 1706 residues: Bifunctional hemolysin/adenylate cyclase (1706 aa).

The interval 1 to 399 (MQQSHQAGYA…RRPSLGAVER (399 aa)) is a, catalytic. Position 349–356 (349–356 (AYGVAGKS)) interacts with ATP. Residues 383 to 405 (VPASPGLRRPSLGAVERQDSGYD) form a disordered region. Positions 400-912 (QDSGYDSLDG…LKHSIKLDVI (513 aa)) are b, Ala/Gly-rich. The tract at residues 500–698 (LSAAVFGLGE…SVVGAPVAVV (199 aa)) is required for interaction with CyaC. N6-palmitoyl lysine attachment occurs at residues K860 and K983. The tract at residues 913–1656 (GGDGDDVVLA…RDADHRVEII (744 aa)) is c. Hemolysin-type calcium-binding repeat units lie at residues 1014-1031 (IGGAGNDSITGNAHDNFL), 1032-1049 (AGGSGDDRLDGGAGNDTL), 1050-1067 (VGGEGQNTVIGGAGDDVF), 1155-1172 (WGHDGNDTIRGRGGDDIL), 1173-1190 (RGGLGLDTLYGEDGNDIF), 1279-1296 (MGQGGDDTVRGGDGDDLL), 1297-1314 (FGGDGNDMLYGDAGNDTL), 1315-1332 (YGGLGDDTLEGGAGNDWF), 1335-1352 (TQAREHDVLRGGDGVDTV), 1411-1428 (TGDAQANVLRGAGGADVL), 1429-1446 (AGGEGDDVLLGGDGDDQL), 1447-1464 (SGDAGRDRLYGEAGDDWF), 1468-1484 (AANAGNLLDGGDGRDTV), 1537-1554 (IGDAGANVLNGLAGNDVL), 1555-1572 (SGGAGDDVLLGDEGSDLL), 1573-1590 (SGDAGNDDLFGGQGDDTY), and 1603-1620 (ESGGGHDTIRINAGADQL). The interval 1657–1706 (HAANQAVDQAGIEKLVEAMAQYPDPGAAAAAPPAARVPDTLMQSLAVNWR) is d, Asp/Gly-rich.

In the N-terminal section; belongs to the adenylyl cyclase class-2 family. This sequence in the C-terminal section; belongs to the RTX prokaryotic toxin family. Post-translationally, released in a processed form. Palmitoylated at Lys-860 and Lys-983 by CyaC. The toxin only becomes active when modified in position Lys-983: palmitoylation is required for efficient membrane insertion and pore formation of the acylated Hemolysin chain.

Its subcellular location is the secreted. The protein resides in the host cell membrane. It carries out the reaction ATP = 3',5'-cyclic AMP + diphosphate. Its activity is regulated as follows. Activated by host calmodulin. Bifunctional adenylate cyclase toxin-hemolysin that plays a crucial role in host colonization. It causes whooping cough by acting on mammalian cells by elevating cAMP-concentration and thus disrupts normal cell function. In terms of biological role, adenylate cyclase that is activated by host intracellular calmodulin and catalyzes un-regulated conversion of ATP to cAMP, thereby impairing microbicidal functions of immune effector cells and inducing apoptosis of lung macrophages. Its function is as follows. Hemolysin that forms small cation-selective membrane channels, leading to hemolytic activity. The hemolytic activity of CyaA is weak compared with that of the HlyA of E.coli. The sequence is that of Bifunctional hemolysin/adenylate cyclase (cya) from Bordetella pertussis (strain Tohama I / ATCC BAA-589 / NCTC 13251).